We begin with the raw amino-acid sequence, 203 residues long: V-type ATP synthase subunit D (203 aa).

It belongs to the V-ATPase D subunit family.

In terms of biological role, produces ATP from ADP in the presence of a proton gradient across the membrane. The chain is V-type ATP synthase subunit D from Streptococcus pneumoniae (strain CGSP14).